Here is a 376-residue protein sequence, read N- to C-terminus: Pregnancy-associated glycoprotein 2 (376 aa).

The N-terminal stretch at 1-15 (MKWLVLLGLVALSEC) is a signal peptide. N-linked (GlcNAc...) asparagine glycosylation is found at Asn-51 and Asn-71. Positions 68 to 373 (YVGNITIGTP…DRKNRRIGLA (306 aa)) constitute a Peptidase A1 domain. The active site involves Asp-86. A disulfide bridge links Cys-99 with Cys-104. N-linked (GlcNAc...) asparagine glycans are attached at residues Asn-114, Asn-248, and Asn-252. Cys-258 and Cys-262 form a disulfide bridge. Asp-267 is a catalytic residue. Cys-300 and Cys-333 form a disulfide bridge. N-linked (GlcNAc...) asparagine glycosylation is present at Asn-343.

Belongs to the peptidase A1 family. Post-translationally, N-Glycosylated; the glycans terminate in either N-acetyl-galactosamine (GalNAc) or N-acetyllactosamine. Terminal GalNAc on Asn-linked glycans is greatly reduced prior to parturition while lactosamine-type N-glycans remain unaltered. In terms of tissue distribution, trophoblast and placental tissue. Localized to both the mononucleate and binucleate cells of the trophectoderm.

It is found in the secreted. It localises to the extracellular space. Its function is as follows. PAG2 or a processed derivative of this molecule might represent a factor that binds the LH receptor. The protein is Pregnancy-associated glycoprotein 2 (PAG2) of Bos taurus (Bovine).